A 228-amino-acid polypeptide reads, in one-letter code: LexA repressor (228 aa).

The H-T-H motif DNA-binding region spans 26 to 46 (FDEMKDALDLRSKSGIHRLIT). Catalysis depends on for autocatalytic cleavage activity residues Ser-149 and Lys-187.

It belongs to the peptidase S24 family. As to quaternary structure, homodimer.

The catalysed reaction is Hydrolysis of Ala-|-Gly bond in repressor LexA.. Represses a number of genes involved in the response to DNA damage (SOS response), including recA and lexA. In the presence of single-stranded DNA, RecA interacts with LexA causing an autocatalytic cleavage which disrupts the DNA-binding part of LexA, leading to derepression of the SOS regulon and eventually DNA repair. This is LexA repressor from Cereibacter sphaeroides (strain ATCC 17025 / ATH 2.4.3) (Rhodobacter sphaeroides).